The chain runs to 306 residues: D-alanine--D-alanine ligase (306 aa).

The region spanning 101–300 is the ATP-grasp domain; the sequence is RIMLAAAGVP…FGELVTWMVE (200 aa). 128-182 provides a ligand contact to ATP; it reads MPTPYVLKPNAGGSSVGVFIVREDQAHPPQELTREDWPHGENLLAEEFIPGLELT. Asp-250, Glu-267, and Asn-269 together coordinate Mg(2+).

The protein belongs to the D-alanine--D-alanine ligase family. Mg(2+) serves as cofactor. Requires Mn(2+) as cofactor.

The protein localises to the cytoplasm. The catalysed reaction is 2 D-alanine + ATP = D-alanyl-D-alanine + ADP + phosphate + H(+). It functions in the pathway cell wall biogenesis; peptidoglycan biosynthesis. Its function is as follows. Cell wall formation. The polypeptide is D-alanine--D-alanine ligase (Xanthobacter autotrophicus (strain ATCC BAA-1158 / Py2)).